Consider the following 305-residue polypeptide: tRNA dimethylallyltransferase (305 aa).

8–15 is a binding site for ATP; that stretch reads GPTAVGKT. Residue 10–15 participates in substrate binding; the sequence is TAVGKT. The interaction with substrate tRNA stretch occupies residues 33 to 36; it reads DSRQ.

The protein belongs to the IPP transferase family. Monomer. Requires Mg(2+) as cofactor.

It carries out the reaction adenosine(37) in tRNA + dimethylallyl diphosphate = N(6)-dimethylallyladenosine(37) in tRNA + diphosphate. Its function is as follows. Catalyzes the transfer of a dimethylallyl group onto the adenine at position 37 in tRNAs that read codons beginning with uridine, leading to the formation of N6-(dimethylallyl)adenosine (i(6)A). The protein is tRNA dimethylallyltransferase of Thermotoga petrophila (strain ATCC BAA-488 / DSM 13995 / JCM 10881 / RKU-1).